Reading from the N-terminus, the 206-residue chain is Ribosomal RNA large subunit methyltransferase E (206 aa).

Residues Gly61, Trp63, Asp81, Asp97, and Asp122 each contribute to the S-adenosyl-L-methionine site. The Proton acceptor role is filled by Lys162.

Belongs to the class I-like SAM-binding methyltransferase superfamily. RNA methyltransferase RlmE family.

It localises to the cytoplasm. It catalyses the reaction uridine(2552) in 23S rRNA + S-adenosyl-L-methionine = 2'-O-methyluridine(2552) in 23S rRNA + S-adenosyl-L-homocysteine + H(+). Its function is as follows. Specifically methylates the uridine in position 2552 of 23S rRNA at the 2'-O position of the ribose in the fully assembled 50S ribosomal subunit. This chain is Ribosomal RNA large subunit methyltransferase E, found in Neisseria gonorrhoeae (strain ATCC 700825 / FA 1090).